The sequence spans 630 residues: DELLA protein DWARF8 (630 aa).

Positions 1 to 35 are disordered; sequence MKREYQDAGGSGGDMGSSKDKMMAAAAGAGEQEEE. The DELLA motif signature appears at 38-42; it reads DELLA. Positions 161 to 222 are disordered; sequence PIPSPVAAPS…AAPPATQASA (62 aa). Composition is skewed to low complexity over residues 165 to 176 and 191 to 222; these read PVAAPSADPSTD and TSSSSSSSSSMDGGRTRSSVVEAAPPATQASA. One can recognise a GRAS domain in the interval 234-623; sequence VDTQEAGIRL…RPLIATSAWR (390 aa). A leucine repeat I (LRI) region spans residues 241–297; sequence IRLVHALLACAEAVQQENFSAAEALVKQIPMLASSQGGAMRKVAAYFGEALARRVYR. A LxCxE motif motif is present at residues 248–252; that stretch reads LACAE. Residues 316–381 form a VHIID region; sequence HAHFYESCPY…GGPPSFRLTG (66 aa). The short motif at 347–351 is the VHIID element; that stretch reads VHVVD. Residues 395–427 form a leucine repeat II (LRII) region; sequence QVGWKLAQFAHTIRVDFQYRGLVAATLADLEPF. A PFYRE region spans residues 443–544; it reads IAVNSVFELH…EVYLGRQICN (102 aa). Positions 451–455 match the LXXLL motif motif; the sequence is LHRLL. The tract at residues 547–623 is SAW; the sequence is ACEGAERTER…RPLIATSAWR (77 aa).

It belongs to the GRAS family. DELLA subfamily. Phosphorylated. In terms of processing, ubiquitinated. Upon GA application it is ubiquitinated, leading to its subsequent degradation.

Its subcellular location is the nucleus. Functionally, probable transcriptional regulator that acts as a repressor of the gibberellin (GA) signaling pathway. Probably acts by participating in large multiprotein complexes that repress transcription of GA-inducible genes. Upon GA application, it is degraded by the proteasome, allowing the GA signaling pathway. The sequence is that of DELLA protein DWARF8 (D8) from Zea mays (Maize).